Reading from the N-terminus, the 274-residue chain is Large ribosomal subunit protein uL2 (274 aa).

Positions 221 to 256 are disordered; it reads RGTAMNPVDHPHGGGEGRNFGKHPVTPWGVPTKGYK.

It belongs to the universal ribosomal protein uL2 family. Part of the 50S ribosomal subunit. Forms a bridge to the 30S subunit in the 70S ribosome.

Functionally, one of the primary rRNA binding proteins. Required for association of the 30S and 50S subunits to form the 70S ribosome, for tRNA binding and peptide bond formation. It has been suggested to have peptidyltransferase activity; this is somewhat controversial. Makes several contacts with the 16S rRNA in the 70S ribosome. The sequence is that of Large ribosomal subunit protein uL2 from Hahella chejuensis (strain KCTC 2396).